The primary structure comprises 259 residues: uncharacterized protein (259 aa).

Positions 1 to 159 constitute an FAD-binding PCMH-type domain; it reads MIEQFFRPDS…TEIIIKDPYR (159 aa).

This is an uncharacterized protein from Escherichia coli O157:H7.